A 136-amino-acid polypeptide reads, in one-letter code: MLQPKRTKFRKVHKGRNRGIAAGTEVSFGTFGLKAVGRGRLTARQIEAARRAMTRAVKRQGKIWIRVFPDKPITEKPLEVRMGKGKGNVEYWVALIQPGKVMYEMDGVSEEVARHAFALAAAKLPIKTTFVTKTVM.

It belongs to the universal ribosomal protein uL16 family. As to quaternary structure, part of the 50S ribosomal subunit.

Its function is as follows. Binds 23S rRNA and is also seen to make contacts with the A and possibly P site tRNAs. This is Large ribosomal subunit protein uL16 from Histophilus somni (strain 129Pt) (Haemophilus somnus).